A 204-amino-acid chain; its full sequence is Guanylate kinase (204 aa).

The Guanylate kinase-like domain occupies 18–196 (PKLFTISAPA…SYEILKSIFI (179 aa)). ATP is bound at residue 25 to 32 (APAGAGKT).

This sequence belongs to the guanylate kinase family.

The protein localises to the cytoplasm. The catalysed reaction is GMP + ATP = GDP + ADP. Essential for recycling GMP and indirectly, cGMP. This is Guanylate kinase from Chlamydia caviae (strain ATCC VR-813 / DSM 19441 / 03DC25 / GPIC) (Chlamydophila caviae).